Reading from the N-terminus, the 108-residue chain is Putative membrane protein insertion efficiency factor (108 aa).

It belongs to the UPF0161 family.

It localises to the cell inner membrane. Could be involved in insertion of integral membrane proteins into the membrane. The polypeptide is Putative membrane protein insertion efficiency factor (Chelativorans sp. (strain BNC1)).